The following is a 65-amino-acid chain: Protein translocase subunit SecE (65 aa).

The helical transmembrane segment at 38-58 (IVIVTVVFFLIFFYALDLGIG) threads the bilayer.

The protein belongs to the SecE/SEC61-gamma family. As to quaternary structure, component of the Sec protein translocase complex. Heterotrimer consisting of SecY, SecE and SecG subunits. The heterotrimers can form oligomers, although 1 heterotrimer is thought to be able to translocate proteins. Interacts with the ribosome. Interacts with SecDF, and other proteins may be involved. Interacts with SecA.

Its subcellular location is the cell membrane. In terms of biological role, essential subunit of the Sec protein translocation channel SecYEG. Clamps together the 2 halves of SecY. May contact the channel plug during translocation. The protein is Protein translocase subunit SecE of Staphylococcus carnosus (strain TM300).